The sequence spans 200 residues: Sperm acrosome developmental regulator (200 aa).

Phosphoserine is present on S63. Over residues 167–183 the composition is skewed to basic residues; sequence QERRRRRRMRSHASHTS. Residues 167 to 200 are disordered; the sequence is QERRRRRRMRSHASHTSRHSESVQGLKHDARSPL. A compositionally biased stretch (basic and acidic residues) spans 184–200; sequence RHSESVQGLKHDARSPL.

It localises to the cytoplasmic vesicle. The protein localises to the secretory vesicle. The protein resides in the acrosome. Its function is as follows. May play an important role in acrosome formation and nucleus shaping during spermiogenesis. This chain is Sperm acrosome developmental regulator (Spacdr), found in Rattus norvegicus (Rat).